Consider the following 201-residue polypeptide: Ras-related protein Rab-9B (201 aa).

Residues Val-18, Gly-19, Lys-20, Ser-21, Ser-22, Asp-33, Ser-34, Ala-36, His-38, and Thr-39 each coordinate GTP. A Mg(2+)-binding site is contributed by Ser-21. Residues 31–42 (KFDSQAFHTIGV) carry the Switch 1 motif. Ser-34 bears the Phosphoserine mark. Mg(2+) is bound by residues Thr-39 and Asp-62. Residues 64–78 (AGQERFKSLRTPFYR) carry the Switch 2 motif. GTP is bound by residues Gly-65, Asn-124, Lys-125, Ala-155, and Lys-156. Residues Cys-200 and Cys-201 are each lipidated (S-geranylgeranyl cysteine).

The protein belongs to the small GTPase superfamily. Rab family. In terms of assembly, interacts (GTP-bound form) with SGSM1; the GDP-bound form has much lower affinity for SGSM1. The GTP-bound form but not the GDP-bound form interacts with HPS4 and the BLOC-3 complex (heterodimer of HPS1 and HPS4) but does not interact with HPS1 alone. Interacts (GTP-bound form) with NDE1. Requires Mg(2+) as cofactor. As to expression, ubiquitous.

The protein resides in the cell membrane. The protein localises to the cytoplasmic vesicle. Its subcellular location is the phagosome. It is found in the phagosome membrane. The catalysed reaction is GTP + H2O = GDP + phosphate + H(+). Its activity is regulated as follows. Regulated by guanine nucleotide exchange factors (GEFs) which promote the exchange of bound GDP for free GTP. Regulated by GTPase activating proteins (GAPs) which increase the GTP hydrolysis activity. Inhibited by GDP dissociation inhibitors (GDIs). The small GTPases Rab are key regulators of intracellular membrane trafficking, from the formation of transport vesicles to their fusion with membranes. Rabs cycle between an inactive GDP-bound form and an active GTP-bound form that is able to recruit to membranes different sets of downstream effectors directly responsible for vesicle formation, movement, tethering and fusion. RAB9B is involved in the transport of proteins between the endosomes and the trans Golgi network. May use NDE1/NDEL1 as an effector to interact with the dynein motor complex in order to control retrograde trafficking of RAB9-associated late endosomes to the TGN. This chain is Ras-related protein Rab-9B, found in Homo sapiens (Human).